Here is a 410-residue protein sequence, read N- to C-terminus: Multifunctional CCA protein (410 aa).

Positions 8 and 11 each coordinate ATP. CTP contacts are provided by glycine 8 and arginine 11. Residues aspartate 21 and aspartate 23 each coordinate Mg(2+). 3 residues coordinate ATP: arginine 91, arginine 138, and arginine 141. 3 residues coordinate CTP: arginine 91, arginine 138, and arginine 141. The HD domain occupies 229–347; it reads TGVHQEMVSD…AQLALVCEAD (119 aa).

The protein belongs to the tRNA nucleotidyltransferase/poly(A) polymerase family. Bacterial CCA-adding enzyme type 1 subfamily. Monomer. Can also form homodimers and oligomers. Requires Mg(2+) as cofactor. It depends on Ni(2+) as a cofactor.

The catalysed reaction is a tRNA precursor + 2 CTP + ATP = a tRNA with a 3' CCA end + 3 diphosphate. The enzyme catalyses a tRNA with a 3' CCA end + 2 CTP + ATP = a tRNA with a 3' CCACCA end + 3 diphosphate. In terms of biological role, catalyzes the addition and repair of the essential 3'-terminal CCA sequence in tRNAs without using a nucleic acid template. Adds these three nucleotides in the order of C, C, and A to the tRNA nucleotide-73, using CTP and ATP as substrates and producing inorganic pyrophosphate. tRNA 3'-terminal CCA addition is required both for tRNA processing and repair. Also involved in tRNA surveillance by mediating tandem CCA addition to generate a CCACCA at the 3' terminus of unstable tRNAs. While stable tRNAs receive only 3'-terminal CCA, unstable tRNAs are marked with CCACCA and rapidly degraded. The sequence is that of Multifunctional CCA protein from Xanthomonas campestris pv. campestris (strain B100).